Consider the following 211-residue polypeptide: Thiamine-phosphate synthase (211 aa).

4-amino-2-methyl-5-(diphosphooxymethyl)pyrimidine is bound by residues 37–41 and asparagine 69; that span reads QLRIK. Residues aspartate 70 and aspartate 89 each coordinate Mg(2+). Serine 108 contacts 4-amino-2-methyl-5-(diphosphooxymethyl)pyrimidine. 134–136 is a binding site for 2-[(2R,5Z)-2-carboxy-4-methylthiazol-5(2H)-ylidene]ethyl phosphate; it reads TQT. Lysine 137 provides a ligand contact to 4-amino-2-methyl-5-(diphosphooxymethyl)pyrimidine. Residues glycine 166 and 186 to 187 each bind 2-[(2R,5Z)-2-carboxy-4-methylthiazol-5(2H)-ylidene]ethyl phosphate; that span reads VS.

Belongs to the thiamine-phosphate synthase family. The cofactor is Mg(2+).

The catalysed reaction is 2-[(2R,5Z)-2-carboxy-4-methylthiazol-5(2H)-ylidene]ethyl phosphate + 4-amino-2-methyl-5-(diphosphooxymethyl)pyrimidine + 2 H(+) = thiamine phosphate + CO2 + diphosphate. The enzyme catalyses 2-(2-carboxy-4-methylthiazol-5-yl)ethyl phosphate + 4-amino-2-methyl-5-(diphosphooxymethyl)pyrimidine + 2 H(+) = thiamine phosphate + CO2 + diphosphate. It catalyses the reaction 4-methyl-5-(2-phosphooxyethyl)-thiazole + 4-amino-2-methyl-5-(diphosphooxymethyl)pyrimidine + H(+) = thiamine phosphate + diphosphate. Its pathway is cofactor biosynthesis; thiamine diphosphate biosynthesis; thiamine phosphate from 4-amino-2-methyl-5-diphosphomethylpyrimidine and 4-methyl-5-(2-phosphoethyl)-thiazole: step 1/1. Its function is as follows. Condenses 4-methyl-5-(beta-hydroxyethyl)thiazole monophosphate (THZ-P) and 2-methyl-4-amino-5-hydroxymethyl pyrimidine pyrophosphate (HMP-PP) to form thiamine monophosphate (TMP). This chain is Thiamine-phosphate synthase, found in Citrobacter koseri (strain ATCC BAA-895 / CDC 4225-83 / SGSC4696).